The sequence spans 149 residues: Deoxyuridine 5'-triphosphate nucleotidohydrolase (149 aa).

Substrate contacts are provided by residues 68–70, Asn81, and 85–87; these read RSG and LID.

Belongs to the dUTPase family. It depends on Mg(2+) as a cofactor.

The catalysed reaction is dUTP + H2O = dUMP + diphosphate + H(+). Its pathway is pyrimidine metabolism; dUMP biosynthesis; dUMP from dCTP (dUTP route): step 2/2. In terms of biological role, this enzyme is involved in nucleotide metabolism: it produces dUMP, the immediate precursor of thymidine nucleotides and it decreases the intracellular concentration of dUTP so that uracil cannot be incorporated into DNA. The sequence is that of Deoxyuridine 5'-triphosphate nucleotidohydrolase from Laribacter hongkongensis (strain HLHK9).